Here is an 870-residue protein sequence, read N- to C-terminus: Valine--tRNA ligase (870 aa).

A compositionally biased stretch (polar residues) spans 1-13; sequence MTSQTFTTSSATP. The disordered stretch occupies residues 1 to 21; sequence MTSQTFTTSSATPPTRGVVPD. A 'HIGH' region motif is present at residues 63-73; it reads PTVSGHLHPGH. The segment at 479–505 is disordered; sequence YDHPLLPDESALPVDPASQPPSGYQES. A 'KMSKS' region motif is present at residues 595–599; sequence KMSKS. K598 contributes to the ATP binding site.

It belongs to the class-I aminoacyl-tRNA synthetase family. ValS type 2 subfamily. In terms of assembly, monomer.

The protein localises to the cytoplasm. It catalyses the reaction tRNA(Val) + L-valine + ATP = L-valyl-tRNA(Val) + AMP + diphosphate. Its function is as follows. Catalyzes the attachment of valine to tRNA(Val). As ValRS can inadvertently accommodate and process structurally similar amino acids such as threonine, to avoid such errors, it has a 'posttransfer' editing activity that hydrolyzes mischarged Thr-tRNA(Val) in a tRNA-dependent manner. This Cutibacterium acnes (strain DSM 16379 / KPA171202) (Propionibacterium acnes) protein is Valine--tRNA ligase.